Reading from the N-terminus, the 253-residue chain is MLIQDTIFYRPDWRWHNFLKYLTNNLSKYNCLEKKIPSEYSYKDSTYGSKKLKKNVNLSTWGVTHKKRIQFARAVCINSPNYSVLNFLIIPNTIYNVPFFGVDFVSLPNSHLLVLDFQPSLKIQKQYNNELLEKLIKLKNHCHSSLPLAEKMSADVARFFSPGVIWSKLPKEERSDFLITNQLYTSFKEYLDLYLEILFESKEVNLELQKELINGQNEYLNYRRDNDPARPMLSSLFGKEFTESLIEEVLFTT.

This sequence belongs to the HY2 family.

It carries out the reaction (3Z)-phycoerythrobilin + oxidized 2[4Fe-4S]-[ferredoxin] = 15,16-dihydrobiliverdin + reduced 2[4Fe-4S]-[ferredoxin] + 2 H(+). Its function is as follows. Catalyzes the two-electron reduction of the C2 and C3(1) diene system of 15,16-dihydrobiliverdin. The protein is Phycoerythrobilin:ferredoxin oxidoreductase of Prochlorococcus marinus (strain MIT 9301).